Consider the following 298-residue polypeptide: Small ribosomal subunit protein uS2 (298 aa).

The disordered stretch occupies residues 272–298 (EGGDWAASSAAPAGESWAEAQPTEAKW).

It belongs to the universal ribosomal protein uS2 family. As to quaternary structure, component of the small ribosomal subunit. Mature ribosomes consist of a small (40S) and a large (60S) subunit. The 40S subunit contains about 33 different proteins and 1 molecule of RNA (18S). The 60S subunit contains about 49 different proteins and 3 molecules of RNA (25S, 5.8S and 5S). Interacts with rps21.

It localises to the cytoplasm. Required for the assembly and/or stability of the 40S ribosomal subunit. Required for the processing of the 20S rRNA-precursor to mature 18S rRNA in a late step of the maturation of 40S ribosomal subunits. The protein is Small ribosomal subunit protein uS2 (rps0) of Aspergillus niger (strain ATCC MYA-4892 / CBS 513.88 / FGSC A1513).